The chain runs to 117 residues: Hydrogenase maturation factor HypA (117 aa).

His-2 is a binding site for Ni(2+). The Zn(2+) site is built by Cys-73, Cys-76, Cys-89, and Cys-92.

This sequence belongs to the HypA/HybF family.

Involved in the maturation of [NiFe] hydrogenases. Required for nickel insertion into the metal center of the hydrogenase. The chain is Hydrogenase maturation factor HypA from Shewanella baltica (strain OS185).